A 1653-amino-acid polypeptide reads, in one-letter code: Protein TOPAZ1 (1653 aa).

Disordered regions lie at residues 1–88 (MPRA…PGID), 212–238 (GCMH…TDPS), 553–591 (KMKS…KKDR), 855–893 (PNVA…GSMK), and 919–942 (EVTH…SSDL). Basic and acidic residues-rich tracts occupy residues 58-69 (SGREEVESDKSA) and 221-236 (SKSK…DKTD). The span at 561–585 (RSASEVVSNTTEDTSLTNMTHNLTG) shows a compositional bias: polar residues. 2 stretches are compositionally biased toward basic and acidic residues: residues 858–877 (AEEH…KKEP) and 920–942 (VTHE…SSDL).

Its subcellular location is the cytoplasm. It localises to the cytosol. Its function is as follows. Important for normal spermatogenesis and male fertility. Specifically required for progression to the post-meiotic stages of spermatocyte development. Seems to be necessary for normal expression levels of a number of testis-expressed gene transcripts, although its role in this process is unclear. This Bos taurus (Bovine) protein is Protein TOPAZ1 (TOPAZ1).